A 609-amino-acid chain; its full sequence is Putative 4-coumarate--CoA ligase-like 8 (609 aa).

6 residues coordinate ATP: Ser-194, Ser-195, Gly-196, Thr-197, Thr-198, and Lys-202. 2 residues coordinate (E)-4-coumaroyl-AMP: Phe-252 and Ser-256. Residue Arg-274 participates in CoA binding. Residues 276-348 (SVEKTMAAVE…SCFPAVNLGQ (73 aa)) form an SBD1 region. Residues Gly-326, Gln-348, Thr-353, and Met-361 each contribute to the (E)-4-coumaroyl-AMP site. ATP is bound by residues Gln-348 and Thr-353. Residues 349–450 (CYGLTETTGI…VRGPSTMRGY (102 aa)) form an SBD2 region. ATP-binding residues include Asp-482 and Arg-497. (E)-4-coumaroyl-AMP is bound by residues Lys-499 and Lys-503. Ala-506 lines the CoA pocket. Lys-589 contributes to the ATP binding site.

It belongs to the ATP-dependent AMP-binding enzyme family. Requires Mg(2+) as cofactor.

It carries out the reaction (E)-4-coumarate + ATP + CoA = (E)-4-coumaroyl-CoA + AMP + diphosphate. The enzyme catalyses (E)-4-coumarate + ATP + H(+) = (E)-4-coumaroyl-AMP + diphosphate. The catalysed reaction is (E)-4-coumaroyl-AMP + CoA = (E)-4-coumaroyl-CoA + AMP + H(+). In terms of biological role, carboxylate--CoA ligase that may use 4-coumarate as substrate. Follows a two-step reaction mechanism, wherein the carboxylate substrate first undergoes adenylation by ATP, followed by a thioesterification in the presence of CoA to yield the final CoA thioester. The sequence is that of Putative 4-coumarate--CoA ligase-like 8 (4CLL8) from Oryza sativa subsp. japonica (Rice).